A 474-amino-acid polypeptide reads, in one-letter code: Calcium/calmodulin-dependent protein kinase type IV (474 aa).

2 positions are modified to phosphoserine; by autocatalysis: Ser-11 and Ser-12. In terms of domain architecture, Protein kinase spans 42 to 296 (FEVESELGRG…TFQALQHPWV (255 aa)). Residues 48–56 (LGRGATSIV) and Lys-71 contribute to the ATP site. Thr-53 carries O-linked (GlcNAc) threonine glycosylation. Residue Ser-54 is glycosylated (O-linked (GlcNAc) serine). Ser-133 carries O-linked (GlcNAc) serine glycosylation. Asp-160 (proton acceptor) is an active-site residue. A glycan (O-linked (GlcNAc) serine) is linked at Ser-185. Thr-196 is modified (phosphothreonine; by CaMKK1 and CaMKK2). The interval 297 to 336 (TGKAANFVHMDTAQKKLQEFNARRKLKAAVKAVVASSRLG) is autoinhibitory domain. Residues 302–319 (NFVHMDTAQKKLQEFNAR) form a PP2A-binding region. A calmodulin-binding region spans residues 318–337 (ARRKLKAAVKAVVASSRLGS). Ser-332 is modified (phosphoserine; by autocatalysis). Positions 336–474 (GSASSSHTNI…PQQDAILPEY (139 aa)) are disordered. Position 337 is a phosphoserine (Ser-337). 3 O-linked (GlcNAc) serine glycosylation sites follow: Ser-340, Ser-341, and Ser-352. Residues 342 to 356 (HTNIQESNKASSEAQ) are compositionally biased toward polar residues. The span at 360–392 (DGKDKTDPLENKMQAGDHEAAKAAADETMKLQS) shows a compositional bias: basic and acidic residues. Over residues 393–413 (EEVEEEEGVKEEEEEEEEEEE) the composition is skewed to acidic residues. Residues 431 to 454 (QEMKRNSEETLKSVEEEMDPKAEE) show a composition bias toward basic and acidic residues. Phosphoserine occurs at positions 437 and 443.

This sequence belongs to the protein kinase superfamily. CAMK Ser/Thr protein kinase family. CaMK subfamily. As to quaternary structure, monomer. Interacts with protein phosphatase 2A (PPP2CA/PPP2CB); the interaction is mutually exclusive with binding to Ca(2+)/calmodulin. In terms of processing, phosphorylated by CaMKK1 and CaMKK2 on Thr-196. Dephosphorylated by protein phosphatase 2A. Autophosphorylated on Ser-11 and Ser-12. Post-translationally, glycosylation at Ser-185 modulates the phosphorylation of CaMK4 at Thr-196 and negatively regulates its activity toward CREB1 in basal conditions and during early inomycin stimulation. The N-terminus of calspermin is blocked. As to expression, isoform 1 is expressed in brain and isoform 2 is testis specific.

The protein localises to the cytoplasm. The protein resides in the nucleus. It carries out the reaction L-seryl-[protein] + ATP = O-phospho-L-seryl-[protein] + ADP + H(+). The enzyme catalyses L-threonyl-[protein] + ATP = O-phospho-L-threonyl-[protein] + ADP + H(+). With respect to regulation, activated by Ca(2+)/calmodulin. Binding of calmodulin results in conformational change that relieves intrasteric autoinhibition and allows phosphorylation of Thr-196 within the activation loop by CaMKK1 or CaMKK2. Phosphorylation of Thr-196 results in a 10-20-fold increase in total activity to generate Ca(2+)/calmodulin-independent activity. Autophosphorylation of the N-terminus Ser-11 and Ser-12 is required for full activation. Inactivated by protein phosphatase 2A (PPP2CA/PPP2CB) which dephosphorylates Thr-196, thereby terminating autonomous activity and helping to maintain the enzyme in its autoinhibited state. Calcium/calmodulin-dependent protein kinase that operates in the calcium-triggered CaMKK-CaMK4 signaling cascade and regulates, mainly by phosphorylation, the activity of several transcription activators, such as CREB1, MEF2D, JUN and RORA, which play pivotal roles in immune response, inflammation, and memory consolidation. In the thymus, regulates the CD4(+)/CD8(+) double positive thymocytes selection threshold during T-cell ontogeny. In CD4 memory T-cells, is required to link T-cell antigen receptor (TCR) signaling to the production of IL2, IFNG and IL4 (through the regulation of CREB and MEF2). Regulates the differentiation and survival phases of osteoclasts and dendritic cells (DCs). Mediates DCs survival by linking TLR4 and the regulation of temporal expression of BCL2. Phosphorylates the transcription activator CREB1 on 'Ser-133' in hippocampal neuron nuclei and contribute to memory consolidation and long term potentiation (LTP) in the hippocampus. Can activate the MAP kinases MAPK1/ERK2, MAPK8/JNK1 and MAPK14/p38 and stimulate transcription through the phosphorylation of ELK1 and ATF2. Can also phosphorylate in vitro CREBBP, PRM2, MEF2A and STMN1/OP18. Functionally, heat-stable, acidic, calmodulin-binding protein. The sequence is that of Calcium/calmodulin-dependent protein kinase type IV (Camk4) from Rattus norvegicus (Rat).